The sequence spans 294 residues: Elongation factor Ts (294 aa).

The involved in Mg(2+) ion dislocation from EF-Tu stretch occupies residues 81–84; the sequence is TDFV.

The protein belongs to the EF-Ts family.

It is found in the cytoplasm. Functionally, associates with the EF-Tu.GDP complex and induces the exchange of GDP to GTP. It remains bound to the aminoacyl-tRNA.EF-Tu.GTP complex up to the GTP hydrolysis stage on the ribosome. This is Elongation factor Ts from Lawsonia intracellularis (strain PHE/MN1-00).